A 180-amino-acid polypeptide reads, in one-letter code: MALLLEYLPIIAFFVFYKLADIYVATGVLMVGTVLQILALKLLKQPITTRHWVILAVVMLFGAVTLLLRDDWFIKMKVSVVYVAIALMLLGGLIWKKRSPIQAMMGKDIKLPDTAWSRLTYAWIIFCLALAAVNLYIAEFWSQEAWVNFKVFGILGISLVFTIGTGFYMYHHAIDEETQD.

5 consecutive transmembrane segments (helical) span residues 10–30 (IIAF…GVLM), 47–67 (ITTR…VTLL), 74–94 (IKMK…GGLI), 121–141 (YAWI…AEFW), and 151–171 (VFGI…YMYH).

This sequence belongs to the YciB family.

It is found in the cell inner membrane. In terms of biological role, plays a role in cell envelope biogenesis, maintenance of cell envelope integrity and membrane homeostasis. The protein is Inner membrane-spanning protein YciB of Idiomarina loihiensis (strain ATCC BAA-735 / DSM 15497 / L2-TR).